Consider the following 504-residue polypeptide: Arabinose import ATP-binding protein AraG (504 aa).

ABC transporter domains follow at residues 8 to 243 and 256 to 499; these read LSFR…MVGR and YGEE…MPKV. 40–47 contributes to the ATP binding site; the sequence is GENGAGKS.

Belongs to the ABC transporter superfamily. Arabinose importer (TC 3.A.1.2.2) family. In terms of assembly, the complex is composed of two ATP-binding proteins (AraG), two transmembrane proteins (AraH) and a solute-binding protein (AraF).

The protein localises to the cell inner membrane. The catalysed reaction is L-arabinose(out) + ATP + H2O = L-arabinose(in) + ADP + phosphate + H(+). In terms of biological role, part of the ABC transporter complex AraFGH involved in arabinose import. Responsible for energy coupling to the transport system. The polypeptide is Arabinose import ATP-binding protein AraG (Escherichia coli O157:H7).